The sequence spans 384 residues: Queuine tRNA-ribosyltransferase (384 aa).

Aspartate 103 (proton acceptor) is an active-site residue. Residues 103–107, aspartate 157, glutamine 200, and glycine 227 each bind substrate; that span reads DSGGF. The segment at 258-264 is RNA binding; the sequence is GVGTYRE. The Nucleophile role is filled by aspartate 277. Residues 282–286 form an RNA binding; important for wobble base 34 recognition region; the sequence is TRLAR. Residues cysteine 315, cysteine 317, cysteine 320, and histidine 346 each coordinate Zn(2+).

This sequence belongs to the queuine tRNA-ribosyltransferase family. In terms of assembly, homodimer. Within each dimer, one monomer is responsible for RNA recognition and catalysis, while the other monomer binds to the replacement base PreQ1. Zn(2+) is required as a cofactor.

It carries out the reaction 7-aminomethyl-7-carbaguanine + guanosine(34) in tRNA = 7-aminomethyl-7-carbaguanosine(34) in tRNA + guanine. Its pathway is tRNA modification; tRNA-queuosine biosynthesis. In terms of biological role, catalyzes the base-exchange of a guanine (G) residue with the queuine precursor 7-aminomethyl-7-deazaguanine (PreQ1) at position 34 (anticodon wobble position) in tRNAs with GU(N) anticodons (tRNA-Asp, -Asn, -His and -Tyr). Catalysis occurs through a double-displacement mechanism. The nucleophile active site attacks the C1' of nucleotide 34 to detach the guanine base from the RNA, forming a covalent enzyme-RNA intermediate. The proton acceptor active site deprotonates the incoming PreQ1, allowing a nucleophilic attack on the C1' of the ribose to form the product. After dissociation, two additional enzymatic reactions on the tRNA convert PreQ1 to queuine (Q), resulting in the hypermodified nucleoside queuosine (7-(((4,5-cis-dihydroxy-2-cyclopenten-1-yl)amino)methyl)-7-deazaguanosine). This Synechococcus elongatus (strain ATCC 33912 / PCC 7942 / FACHB-805) (Anacystis nidulans R2) protein is Queuine tRNA-ribosyltransferase.